The chain runs to 433 residues: Serine/threonine-protein kinase toxin HipA (433 aa).

Ser-147 is subject to Phosphoserine; by autocatalysis. Residues 151–154 (VQPK), Lys-178, and 220–222 (ERF) contribute to the ATP site. Asp-306 (proton acceptor) is an active-site residue. ATP-binding positions include 308 to 311 (HGKN) and 327 to 328 (YD). 2 consecutive DNA-binding regions follow at residues 380-384 (RIARR) and Arg-429.

Belongs to the HipA Ser/Thr kinase family. In terms of assembly, monomer. Forms a HipA(2)HipB(2)-DNA complex with cognate antitoxin HipB; has higher affinity for the latter when HipB is prebound to DNA and HipA is phosphorylated. Binds DNA in the ternary complex.

The enzyme catalyses L-seryl-[protein] + ATP = O-phospho-L-seryl-[protein] + ADP + H(+). The catalysed reaction is L-threonyl-[protein] + ATP = O-phospho-L-threonyl-[protein] + ADP + H(+). Toxic component of a type II toxin-antitoxin (TA) system; overexpression in wild-type temporarily inhibits cell growth, overexpression in a hipAB deletion leads to acute growth inhibition. The toxic effect of HipA is neutralized by its cognate antitoxin HipB. In the ternary phosphoserine-HipA-HipB-DNA complex the DNA is bent about 125 degrees; all HipA in the crystallized ternary complex is phosphorylated. In E.coli phosphorylation of HipA is thought to release HipB from the HipA-HipB-DNA complex, suggesting the complex functions differently in the 2 bacteria. Phosphorylates Glu-tRNA-ligase (GltX, on 'Ser-239') in vivo, with HipB probably acts as a corepressor for transcription of the hipBA promoter. This Shewanella oneidensis (strain ATCC 700550 / JCM 31522 / CIP 106686 / LMG 19005 / NCIMB 14063 / MR-1) protein is Serine/threonine-protein kinase toxin HipA.